Consider the following 165-residue polypeptide: MAKMSLSSYMLMLAFSLFSHGILLSASKSIRNVEDDIVFNTFRMGKAFQKEDTAERSVVAPSLEGYKNDESGFMKDDDDKTTKNTGSKQNLVTHGLPLSLAVKPYLALKGPAVFPAENGVQNTESTQEKREIGDEENSAKFPIGRRDFDMLRCMLGRVYRPCWQV.

Positions 1 to 21 are cleaved as a signal peptide; sequence MAKMSLSSYMLMLAFSLFSHG. A compositionally biased stretch (basic and acidic residues) spans 69 to 82; sequence DESGFMKDDDDKTT. The interval 69-89 is disordered; the sequence is DESGFMKDDDDKTTKNTGSKQ. At isoleucine 143 the chain carries Isoleucine amide. A disulfide bond links cysteine 153 and cysteine 162.

The protein belongs to the melanin-concentrating hormone family. Pro-MCH is processed differentially in the brain and in peripheral organs producing two neuropeptides; NEI and MCH. A third peptide, NGE, may also be produced. Preferential processing in neurons by prohormone convertase 2 (PC2) generates NEI. MCH is generated in neurons of the lateral hypothalmic area by several prohormone convertases including PC1/3, PC2 and PC5/6. In terms of tissue distribution, MCH is present in all regions of the brain and in neurointermediate lobe of the pituarity gland, with highest concentrations in the hypothalamus. Also expressed to a much lesser extent in stomach, lamina propria of both duodenum and colon, ovary, thymus, pancreas, adrenal gland and testis (spermatogonia, early spermatocytes and Sertoli cells). Weak expression in heart and lung. The other peptides are expressed at least in Sertoli cells, nei being also expressed in brain, stomach and proximal duodenum. In brain exclusively mature mch and nei peptides are present. In peripheral tissues a large product, encompassing the NEI and MCH domains of the precursor, is found predominantly. At low levels fully processed MCH and NEI peptides are present in gut. No expression in peripheral blood.

It is found in the secreted. In terms of biological role, MCH inhibits ACTH secretion at the end of the light on period which corresponds to the peak of the circadian rhythm in ACTH. Inhibits also stress induced ACTH release during the light off period of the cycle. Involved as a neurotransmitter or neuromodulator in a broad array of neuronal functions. Stimulates sexual behavior when injected into the ventromedial nucleus, this effect is antagonized by NEI. In the medial preoptic area, stimulates anxiety and sexual behavior. Antagonizes inhibitory effect of melanotropin alpha on exploration behavior. NEI can influence differentiation of neuronal processes in brain neurons. Affects the content of neurofilament protein in neuritogenesis (in vitro). May also be a neuromodulatory factor. In behavioral tests, it stimulates exploration and anxiety when injected into the ventromedial nucleus. Also stimulates grooming, locomotion and rearing. May antagonize the inhibitory effect of mch on ACTH release. Reduces dopamine and dopac release in the ventromedial nucleus. This is Pro-MCH (Pmch) from Rattus norvegicus (Rat).